The sequence spans 435 residues: MTDENNNDSEFAELKIRGKIFKLPILKASIGEDVIDISRVSAEADCFTYDPGFMSTASCQSTITYIDGDKGILRHRGYDIKDLAEKSDFLEVAYLLIYGELPSGEQYNNFTKQVAHHSLVNERLHYLFQTFCSSSHPMAIMLAAVGSLSAFYPDLLNFKEADYELTAIRMIAKIPTIAAMSYKYSIGQPFIYPDNSLDFTENFLHMMFATPCTKYTVNPIIKNALNKIFILHADHEQNASTSTVRIAGSSGANPFACISTGIASLWGPAHGGANEAVINMLKEIGSSEYIPKYIAKAKDKNDPFRLMGFGHRVYKNYDPRAAVLKETCKEVLKELGQLDNNPLLQIAIELEAIALKDEYFIERKLYPNVDFYSGIIYKAMGIPSQMFTVLFVIARTVGWMAQWKEMHEDPEQKISRPRQLYTGYVHREYKGIRER.

Residues His311 and Asp370 contribute to the active site.

The protein belongs to the citrate synthase family. In terms of assembly, homohexamer.

The enzyme catalyses oxaloacetate + acetyl-CoA + H2O = citrate + CoA + H(+). It participates in carbohydrate metabolism; tricarboxylic acid cycle; isocitrate from oxaloacetate: step 1/2. This is Citrate synthase (gltA) from Rickettsia africae (strain ESF-5).